A 421-amino-acid polypeptide reads, in one-letter code: MTESVLDYMTRLGRAARQASRLIARASTAQKNRALLAAADALDASRSELTAANEQDLANGRANGLEPALLDRLALTPARIDDMIEGLRQVAKLPDPIGEIRDMRYLPSGIQVGKMRVPLGVIGIIYESRPNVTIDAASLCLKSGNATILRGGSEAINSNRAIAACIQQGLAVAELPAEVVQVVETTDRAAVGALITMPEFVDVIVPRGGKSLIERVSRDAKVPVIKHLDGVCHVFIDIAADIDKAIRIADNAKTHRYAPCNTMETLLVHVGIADRVLPPLAAIYRDKGVELRGCERTRALLGADVIEATELDWYTEYTAPILSIKIVDDLDEAIEHINTYGSKHTDAIVSEHFSDARRFLNEVDSASVMINASTRFADGFEYGLGAEIGISTDKLHARGPVGLEGLTSEKYVVFGDGHVRT.

Belongs to the gamma-glutamyl phosphate reductase family.

Its subcellular location is the cytoplasm. The enzyme catalyses L-glutamate 5-semialdehyde + phosphate + NADP(+) = L-glutamyl 5-phosphate + NADPH + H(+). It participates in amino-acid biosynthesis; L-proline biosynthesis; L-glutamate 5-semialdehyde from L-glutamate: step 2/2. Its function is as follows. Catalyzes the NADPH-dependent reduction of L-glutamate 5-phosphate into L-glutamate 5-semialdehyde and phosphate. The product spontaneously undergoes cyclization to form 1-pyrroline-5-carboxylate. The protein is Gamma-glutamyl phosphate reductase of Pseudomonas fluorescens (strain SBW25).